The sequence spans 313 residues: Porphobilinogen deaminase (313 aa).

Residue Cys242 is modified to S-(dipyrrolylmethanemethyl)cysteine.

This sequence belongs to the HMBS family. In terms of assembly, monomer. Requires dipyrromethane as cofactor.

The catalysed reaction is 4 porphobilinogen + H2O = hydroxymethylbilane + 4 NH4(+). It functions in the pathway porphyrin-containing compound metabolism; protoporphyrin-IX biosynthesis; coproporphyrinogen-III from 5-aminolevulinate: step 2/4. Functionally, tetrapolymerization of the monopyrrole PBG into the hydroxymethylbilane pre-uroporphyrinogen in several discrete steps. In Pseudomonas fluorescens (strain SBW25), this protein is Porphobilinogen deaminase.